The following is a 339-amino-acid chain: EEIG family member 2 (339 aa).

A C2 NT-type domain is found at 1–111; the sequence is MRLLDGGSFT…ILKVLISMQL (111 aa). Ser197 bears the Phosphoserine mark. Residues 226–262 form a disordered region; that stretch reads TEPITAEPSPDPTAAAATATTTTAKEEEASEKLARCP. Over residues 230–248 the composition is skewed to low complexity; it reads TAEPSPDPTAAAATATTTT. Residues 249 to 259 show a composition bias toward basic and acidic residues; sequence AKEEEASEKLA. Residues Ser255, Ser267, Ser299, Ser300, and Ser329 each carry the phosphoserine modification.

Belongs to the EEIG family. As to expression, expressed in bone marrow-derived macrophages.

This is EEIG family member 2 (Eeig2) from Mus musculus (Mouse).